The following is a 404-amino-acid chain: MPGIAIIGAQWGDEGKGKITDFLAPQADYVVRYQGGANAGHTVTAKGQTFKLNLLPSGVLHPGTVSILGDGMVIDPEKFLAERQNLLDGGLQPELRISDRAHLVLPHHKFVDGRKDFVGTTGRGIGPAYADRARRVGIRFGDLADESVLRERVERLLEAKPNSTRDAGWTSVTDALGYLLPIRDALLPFVGDTGAQLRQAIREGRNVLFEGAQATLLDLNYGTYPFVTSSHPTVGGILVGAGVNHKAINKVYGVAKAFNTRVGHGPFPTEVFGEMETRLRGDGSNPWDEFGTTTGRARRVGWLDLALLKYAVDVNGLDGLVINKMDILAGLDTVKVGVGYNAAGQPVYRELPGWATTAGAESRATLPKEAQAYLDLIEETVNCPVVIFSCGPAREQTYGAVSWD.

GTP contacts are provided by residues 12–18 (GDEGKGK) and 40–42 (GHT). Aspartate 13 (proton acceptor) is an active-site residue. The Mg(2+) site is built by aspartate 13 and glycine 40. Residues 13–16 (DEGK), 38–41 (NAGH), threonine 121, arginine 135, glutamine 213, threonine 228, and arginine 296 contribute to the IMP site. Residue histidine 41 is the Proton donor of the active site. A substrate-binding site is contributed by 292–298 (TTTGRAR). Residues arginine 298, 324–326 (KMD), and 389–391 (SCG) contribute to the GTP site.

It belongs to the adenylosuccinate synthetase family. In terms of assembly, homodimer. It depends on Mg(2+) as a cofactor.

The protein localises to the cytoplasm. It catalyses the reaction IMP + L-aspartate + GTP = N(6)-(1,2-dicarboxyethyl)-AMP + GDP + phosphate + 2 H(+). It functions in the pathway purine metabolism; AMP biosynthesis via de novo pathway; AMP from IMP: step 1/2. Plays an important role in the de novo pathway of purine nucleotide biosynthesis. Catalyzes the first committed step in the biosynthesis of AMP from IMP. The sequence is that of Adenylosuccinate synthetase from Deinococcus geothermalis (strain DSM 11300 / CIP 105573 / AG-3a).